A 510-amino-acid chain; its full sequence is MSKSPVAIIILDGFGKRAETVGNAVAQANKPNFDRYWANFPHGELKAAGLDVGLPEGQMGNSEVGHTNIGAGRIVYQSLTRIDKAIEEGEFQENKALNNAFTHTKENNSDLHLFGLLSDGGVHSHINHLVALLETAKDKGVKNVYIHAFLDGRDVAPQSSLEYLETLEKAISDLNYGAIATVSGRFYAMDRDKRWERVEKAYKAIVSAEGEKFEDPIELVKASYANDKNDEFVVPAIITKDGKPVATVKDNDAVIFFNFRPDRAIQLSNAFTDKEWDHFDRGANHPKNIKFVTMTLYNPSIDAEVAFEPIEMKNVIGEVLSNEGLSQLRIAETEKYPHVTFFMNGGRNEEFPGENRILINSPKVETYDLKPEMSAYEVTDALVEDIKNDKHDAIILNFANPDMVGHSGMLEPTIKAIEAVDENLGRVVDLILEKGGSAIIFADHGNSETMSTPEGKPHTAHTTVPVPVIVTKKGVTLREGGRLADVAPTMLDLLGVKKPAEMTGESLIQK.

Residues Asp12 and Ser62 each coordinate Mn(2+). Catalysis depends on Ser62, which acts as the Phosphoserine intermediate. Substrate contacts are provided by residues His123, Arg153–Asp154, Arg185, Arg191, Arg260–Arg263, and Lys335. Positions 402, 406, 443, 444, and 461 each coordinate Mn(2+).

This sequence belongs to the BPG-independent phosphoglycerate mutase family. In terms of assembly, monomer. The cofactor is Mn(2+).

The enzyme catalyses (2R)-2-phosphoglycerate = (2R)-3-phosphoglycerate. It participates in carbohydrate degradation; glycolysis; pyruvate from D-glyceraldehyde 3-phosphate: step 3/5. Catalyzes the interconversion of 2-phosphoglycerate and 3-phosphoglycerate. The chain is 2,3-bisphosphoglycerate-independent phosphoglycerate mutase from Listeria innocua serovar 6a (strain ATCC BAA-680 / CLIP 11262).